The chain runs to 302 residues: MGVLVKKLIDDLNLEVLVEGKEDVEISVNDINRPGLQLAGFYNYFAPERIQVIGKAEWSFLDYMQIELRKKRVKKYFSFDINCLIITRGLEPHPEFIKEAKKHNIWFVRSNLVTTQFISKTTIYLADKLAPETRLHGVLVDVSGIGILITGESGIGKSETALELIKRGHRLVTDDAVDIKDIDGQLIGRSPKITVGMLEVRGLGIIDVTTLYGLSSVVQEKEIRLVMHFEHWKDDNDYDRLGIDNEYMNILGINVKKLTVPIRPGRNIAVIIEAAAVNYRHALMSKITPVDVIENRMNELND.

Catalysis depends on residues histidine 136 and lysine 157. 151 to 158 (GESGIGKS) is an ATP binding site. Position 158 (serine 158) interacts with Mg(2+). Catalysis depends on aspartate 175, which acts as the Proton acceptor; for phosphorylation activity. Proton donor; for dephosphorylation activity. The segment at 198-207 (LEVRGLGIID) is important for the catalytic mechanism of both phosphorylation and dephosphorylation. Mg(2+) is bound at residue glutamate 199. Arginine 240 is an active-site residue. The segment at 261-266 (PIRPGR) is important for the catalytic mechanism of dephosphorylation.

Belongs to the HPrK/P family. In terms of assembly, homohexamer. The cofactor is Mg(2+).

The catalysed reaction is [HPr protein]-L-serine + ATP = [HPr protein]-O-phospho-L-serine + ADP + H(+). It carries out the reaction [HPr protein]-O-phospho-L-serine + phosphate + H(+) = [HPr protein]-L-serine + diphosphate. Catalyzes the ATP- as well as the pyrophosphate-dependent phosphorylation of a specific serine residue in HPr, a phosphocarrier protein of the phosphoenolpyruvate-dependent sugar phosphotransferase system (PTS). HprK/P also catalyzes the pyrophosphate-producing, inorganic phosphate-dependent dephosphorylation (phosphorolysis) of seryl-phosphorylated HPr (P-Ser-HPr). The two antagonistic activities of HprK/P are regulated by several intracellular metabolites, which change their concentration in response to the absence or presence of rapidly metabolisable carbon sources (glucose, fructose, etc.) in the growth medium. Therefore, by controlling the phosphorylation state of HPr, HPrK/P is a sensor enzyme that plays a major role in the regulation of carbon metabolism and sugar transport: it mediates carbon catabolite repression (CCR), and regulates PTS-catalyzed carbohydrate uptake and inducer exclusion. The polypeptide is HPr kinase/phosphorylase (Clostridium beijerinckii (strain ATCC 51743 / NCIMB 8052) (Clostridium acetobutylicum)).